The primary structure comprises 436 residues: Adenosylmethionine-8-amino-7-oxononanoate aminotransferase (436 aa).

W66 lines the substrate pocket. A pyridoxal 5'-phosphate-binding site is contributed by 126 to 127; that stretch reads GS. Y159 contributes to the substrate binding site. Pyridoxal 5'-phosphate is bound at residue D256. Residues K285 and G318 each contribute to the substrate site. N6-(pyridoxal phosphate)lysine is present on K285. 319-320 contributes to the pyridoxal 5'-phosphate binding site; it reads PT. R402 serves as a coordination point for substrate.

It belongs to the class-III pyridoxal-phosphate-dependent aminotransferase family. BioA subfamily. In terms of assembly, homodimer. The cofactor is pyridoxal 5'-phosphate.

It localises to the cytoplasm. The enzyme catalyses (8S)-8-amino-7-oxononanoate + S-adenosyl-L-methionine = S-adenosyl-4-methylsulfanyl-2-oxobutanoate + (7R,8S)-7,8-diammoniononanoate. Its pathway is cofactor biosynthesis; biotin biosynthesis; 7,8-diaminononanoate from 8-amino-7-oxononanoate (SAM route): step 1/1. In terms of biological role, catalyzes the transfer of the alpha-amino group from S-adenosyl-L-methionine (SAM) to 7-keto-8-aminopelargonic acid (KAPA) to form 7,8-diaminopelargonic acid (DAPA). It is the only aminotransferase known to utilize SAM as an amino donor. This is Adenosylmethionine-8-amino-7-oxononanoate aminotransferase from Mycobacterium leprae (strain TN).